Consider the following 299-residue polypeptide: 4-hydroxybenzoate octaprenyltransferase (299 aa).

The next 8 helical transmembrane spans lie at 33-53 (VGFLLLLWPTWWALWLAADGV), 56-76 (WWTLCVFTTGIWLTRSAGCVI), 107-127 (LLMFATLMLIAFGLVLTMNQL), 151-171 (LPQVYLGLAFGWGIPMAFAAI), 180-200 (WLLYIANILWTTAYDTWYAMV), 213-233 (IAILFAELDLVVQGVLYTLML), 247-267 (HTYWISLISAVALIGYQFIIA), and 278-298 (AFMHNNWVGMTIFAGIALATT).

This sequence belongs to the UbiA prenyltransferase family. It depends on Mg(2+) as a cofactor.

The protein resides in the cell inner membrane. It catalyses the reaction all-trans-octaprenyl diphosphate + 4-hydroxybenzoate = 4-hydroxy-3-(all-trans-octaprenyl)benzoate + diphosphate. It participates in cofactor biosynthesis; ubiquinone biosynthesis. In terms of biological role, catalyzes the prenylation of para-hydroxybenzoate (PHB) with an all-trans polyprenyl group. Mediates the second step in the final reaction sequence of ubiquinone-8 (UQ-8) biosynthesis, which is the condensation of the polyisoprenoid side chain with PHB, generating the first membrane-bound Q intermediate 3-octaprenyl-4-hydroxybenzoate. The protein is 4-hydroxybenzoate octaprenyltransferase of Xylella fastidiosa (strain M12).